Reading from the N-terminus, the 903-residue chain is Centrobin (903 aa).

Polar residues predominate over residues Met-1–Ser-10. The interval Met-1–Val-34 is disordered. Ser-80 carries the post-translational modification Phosphoserine. Disordered stretches follow at residues Leu-110–Ser-140, Leu-471–Gln-493, Leu-568–Arg-597, Ser-669–Ala-704, Arg-772–Thr-799, and Ser-837–Arg-903. A coiled-coil region spans residues Arg-196–His-560. Residues Gln-365–Arg-903 form a required for centrosome localization region. Residues Leu-572–Gln-590 show a composition bias toward pro residues. Positions His-675–Pro-685 are enriched in basic and acidic residues. Low complexity predominate over residues Ser-778–Pro-791. Ser-790 bears the Phosphoserine mark. Residues Ser-837 to Ile-863 show a composition bias toward basic and acidic residues.

As to quaternary structure, interacts with LYST. As to expression, widely expressed (at protein level). Highly expressed in testis. Also expressed in spleen, thymus, prostate, small intestine, colon and peripheral blood leukocytes.

Its subcellular location is the cytoplasm. It localises to the cytoskeleton. The protein resides in the microtubule organizing center. The protein localises to the centrosome. It is found in the centriole. In terms of biological role, required for centriole duplication. Inhibition of centriole duplication leading to defects in cytokinesis. This is Centrobin (CNTROB) from Homo sapiens (Human).